Reading from the N-terminus, the 301-residue chain is Ribosomal protein L11 methyltransferase (301 aa).

S-adenosyl-L-methionine is bound by residues Thr-147, Gly-168, Asp-190, and Asn-237.

It belongs to the methyltransferase superfamily. PrmA family.

The protein localises to the cytoplasm. The enzyme catalyses L-lysyl-[protein] + 3 S-adenosyl-L-methionine = N(6),N(6),N(6)-trimethyl-L-lysyl-[protein] + 3 S-adenosyl-L-homocysteine + 3 H(+). In terms of biological role, methylates ribosomal protein L11. In Synechococcus sp. (strain RCC307), this protein is Ribosomal protein L11 methyltransferase.